The sequence spans 153 residues: Endoribonuclease YbeY (153 aa).

3 residues coordinate Zn(2+): H113, H117, and H123.

This sequence belongs to the endoribonuclease YbeY family. Requires Zn(2+) as cofactor.

It is found in the cytoplasm. Functionally, single strand-specific metallo-endoribonuclease involved in late-stage 70S ribosome quality control and in maturation of the 3' terminus of the 16S rRNA. This is Endoribonuclease YbeY from Aliivibrio salmonicida (strain LFI1238) (Vibrio salmonicida (strain LFI1238)).